The sequence spans 484 residues: Probable glycine dehydrogenase (decarboxylating) subunit 2 (484 aa).

An N6-(pyridoxal phosphate)lysine modification is found at lysine 270.

This sequence belongs to the GcvP family. C-terminal subunit subfamily. The glycine cleavage system is composed of four proteins: P, T, L and H. In this organism, the P 'protein' is a heterodimer of two subunits. It depends on pyridoxal 5'-phosphate as a cofactor.

It carries out the reaction N(6)-[(R)-lipoyl]-L-lysyl-[glycine-cleavage complex H protein] + glycine + H(+) = N(6)-[(R)-S(8)-aminomethyldihydrolipoyl]-L-lysyl-[glycine-cleavage complex H protein] + CO2. Functionally, the glycine cleavage system catalyzes the degradation of glycine. The P protein binds the alpha-amino group of glycine through its pyridoxal phosphate cofactor; CO(2) is released and the remaining methylamine moiety is then transferred to the lipoamide cofactor of the H protein. In Desulforamulus reducens (strain ATCC BAA-1160 / DSM 100696 / MI-1) (Desulfotomaculum reducens), this protein is Probable glycine dehydrogenase (decarboxylating) subunit 2.